Here is a 564-residue protein sequence, read N- to C-terminus: Adenine deaminase (564 aa).

The protein belongs to the metallo-dependent hydrolases superfamily. Adenine deaminase family. The cofactor is Mn(2+).

The catalysed reaction is adenine + H2O + H(+) = hypoxanthine + NH4(+). In Methylobacterium sp. (strain 4-46), this protein is Adenine deaminase.